The primary structure comprises 336 residues: 3-isopropylmalate dehydrogenase (336 aa).

The substrate site is built by R87, R97, R121, and D211. 3 residues coordinate Mg(2+): D211, D235, and D239. 271–283 is a binding site for NAD(+); the sequence is GSAPDIAGQGIAD.

It belongs to the isocitrate and isopropylmalate dehydrogenases family. LeuB type 2 subfamily. In terms of assembly, homodimer. It depends on Mg(2+) as a cofactor. Mn(2+) serves as cofactor.

It localises to the cytoplasm. It catalyses the reaction (2R,3S)-3-isopropylmalate + NAD(+) = 4-methyl-2-oxopentanoate + CO2 + NADH. It functions in the pathway amino-acid biosynthesis; L-leucine biosynthesis; L-leucine from 3-methyl-2-oxobutanoate: step 3/4. In terms of biological role, catalyzes the oxidation of 3-carboxy-2-hydroxy-4-methylpentanoate (3-isopropylmalate) to 3-carboxy-4-methyl-2-oxopentanoate. The product decarboxylates to 4-methyl-2 oxopentanoate. This chain is 3-isopropylmalate dehydrogenase (leuB), found in Mycobacterium tuberculosis (strain CDC 1551 / Oshkosh).